Reading from the N-terminus, the 24-residue chain is U4-ctenitoxin-Co1b (24 aa).

Disulfide bonds are present. In terms of tissue distribution, expressed by the venom gland.

It is found in the secreted. In terms of biological role, omega-agatoxins are antagonists of voltage-gated calcium channels (Cav). The protein is U4-ctenitoxin-Co1b of Ctenus ornatus (Brazilian spider).